We begin with the raw amino-acid sequence, 312 residues long: Small kinetochore-associated protein (312 aa).

The segment at 1–171 is disordered; the sequence is MAAPEAEAQE…PFNKQKPEEE (171 aa). The segment covering 131–143 has biased composition (basic and acidic residues); sequence DVTKVTKSRRENG. The segment at 156-312 is interaction with SPAG5; sequence LRNSYKPFNK…LEEMEQLLEM (157 aa). Coiled-coil stretches lie at residues 166-210 and 246-287; these read QKPE…LEKF and LLET…QFLE.

In terms of assembly, part of an astrin (SPAG5)-kinastrin (SKAP) complex containing KNSTRN, SPAG5, PLK1, DYNLL1 and SGO2A. Interacts with SPAG5. Directly binds to microtubules, although at relatively low affinity. Interacts with CENPE; this interaction greatly favors microtubule-binding. Interacts with DSN1/MIS13; leading to localization to kinetochores. Interacts with MAPRE1/EB1; leading to localization to the microtubule plus ends. Interacts with PRPF19. Interacts with DYNLL1. Interacts with MAP4.

Its subcellular location is the nucleus. It is found in the chromosome. The protein resides in the centromere. The protein localises to the kinetochore. It localises to the cytoplasm. Its subcellular location is the cytoskeleton. It is found in the spindle pole. The protein resides in the microtubule organizing center. In terms of biological role, essential component of the mitotic spindle required for faithful chromosome segregation and progression into anaphase. Promotes the metaphase-to-anaphase transition and is required for chromosome alignment, normal timing of sister chromatid segregation, and maintenance of spindle pole architecture. The astrin (SPAG5)-kinastrin (SKAP) complex promotes stable microtubule-kinetochore attachments. Required for kinetochore oscillations and dynamics of microtubule plus-ends during live cell mitosis, possibly by forming a link between spindle microtubule plus-ends and mitotic chromosomes to achieve faithful cell division. The polypeptide is Small kinetochore-associated protein (Knstrn) (Mus musculus (Mouse)).